Reading from the N-terminus, the 272-residue chain is Dermonecrotic toxin SpeSicTox-betaIB2b (272 aa).

Residue His-5 is part of the active site. Mg(2+)-binding residues include Glu-25 and Asp-27. His-41 serves as the catalytic Nucleophile. Intrachain disulfides connect Cys-45–Cys-51 and Cys-47–Cys-191. Asp-85 contributes to the Mg(2+) binding site.

This sequence belongs to the arthropod phospholipase D family. Class II subfamily. Mg(2+) is required as a cofactor. As to expression, expressed by the venom gland.

The protein localises to the secreted. The catalysed reaction is an N-(acyl)-sphingosylphosphocholine = an N-(acyl)-sphingosyl-1,3-cyclic phosphate + choline. The enzyme catalyses an N-(acyl)-sphingosylphosphoethanolamine = an N-(acyl)-sphingosyl-1,3-cyclic phosphate + ethanolamine. It carries out the reaction a 1-acyl-sn-glycero-3-phosphocholine = a 1-acyl-sn-glycero-2,3-cyclic phosphate + choline. It catalyses the reaction a 1-acyl-sn-glycero-3-phosphoethanolamine = a 1-acyl-sn-glycero-2,3-cyclic phosphate + ethanolamine. In terms of biological role, dermonecrotic toxins cleave the phosphodiester linkage between the phosphate and headgroup of certain phospholipids (sphingolipid and lysolipid substrates), forming an alcohol (often choline) and a cyclic phosphate. This toxin acts on sphingomyelin (SM). It may also act on ceramide phosphoethanolamine (CPE), lysophosphatidylcholine (LPC) and lysophosphatidylethanolamine (LPE), but not on lysophosphatidylserine (LPS), and lysophosphatidylglycerol (LPG). It acts by transphosphatidylation, releasing exclusively cyclic phosphate products as second products. Induces dermonecrosis, hemolysis, increased vascular permeability, edema, inflammatory response, and platelet aggregation. The protein is Dermonecrotic toxin SpeSicTox-betaIB2b of Sicarius peruensis (Six-eyed sand spider).